The chain runs to 204 residues: DNA-directed RNA polymerase III subunit RPC8 (204 aa).

The tract at residues 158–178 (VDTSPTGPSSAEAASSSEELP) is disordered. Residues 166–175 (SSAEAASSSE) show a composition bias toward low complexity.

This sequence belongs to the eukaryotic RPB7/RPC8 RNA polymerase subunit family. As to quaternary structure, component of the RNA polymerase III complex consisting of 17 subunits: a ten-subunit horseshoe-shaped catalytic core composed of POLR3A/RPC1, POLR3B/RPC2, POLR1C/RPAC1, POLR1D/RPAC2, POLR3K/RPC10, POLR2E/RPABC1, POLR2F/RPABC2, POLR2H/RPABC3, POLR2K/RPABC4 and POLR2L/RPABC5; a mobile stalk composed of two subunits POLR3H/RPC8 and CRCP/RPC9, protruding from the core and functioning primarily in transcription initiation; and additional subunits homologous to general transcription factors of the RNA polymerase II machinery, POLR3C/RPC3-POLR3F/RPC6-POLR3G/RPC7 heterotrimer required for transcription initiation and POLR3D/RPC4-POLR3E/RPC5 heterodimer involved in both transcription initiation and termination. Interacts with CRCP/RPC9. POLR3H/RPC8 and CRCP/RPC9 probably form a Pol III subcomplex.

It is found in the nucleus. DNA-dependent RNA polymerase catalyzes the transcription of DNA into RNA using the four ribonucleoside triphosphates as substrates. Specific peripheric component of RNA polymerase III (Pol III) which synthesizes small non-coding RNAs including 5S rRNA, snRNAs, tRNAs and miRNAs from at least 500 distinct genomic loci. With CRCP/RPC9 forms a mobile stalk that protrudes from Pol III core and functions primarily in transcription initiation. Pol III plays a key role in sensing and limiting infection by intracellular bacteria and DNA viruses. Acts as nuclear and cytosolic DNA sensor involved in innate immune response. Can sense non-self dsDNA that serves as template for transcription into dsRNA. The non-self RNA polymerase III transcripts, such as Epstein-Barr virus-encoded RNAs (EBERs) induce type I interferon and NF-kappa-B through the RIG-I pathway. The chain is DNA-directed RNA polymerase III subunit RPC8 (POLR3H) from Bos taurus (Bovine).